Consider the following 574-residue polypeptide: Pyruvate kinase PKLR (574 aa).

4 positions are modified to phosphoserine: Ser-2, Ser-19, Ser-26, and Ser-43. Residue Arg-116 participates in substrate binding. K(+) contacts are provided by Asn-118, Ser-120, Asp-156, and Thr-157. Residue 118 to 121 (NFSH) participates in ATP binding. ATP contacts are provided by Arg-163 and Lys-250. Ser-292 bears the Phosphoserine mark. Lys-313 lines the substrate pocket. Glu-315 lines the Mn(2+) pocket. Substrate contacts are provided by Gly-338, Asp-339, and Thr-371. Asp-339 lines the Mn(2+) pocket. Residues 475–480 (TTTGRS), Trp-525, Arg-532, and 559–564 (RPGSGY) each bind beta-D-fructose 1,6-bisphosphate.

It belongs to the pyruvate kinase family. In terms of assembly, homotetramer. Mg(2+) is required as a cofactor. The cofactor is Mn(2+). Requires K(+) as cofactor.

The enzyme catalyses pyruvate + ATP = phosphoenolpyruvate + ADP + H(+). The protein operates within carbohydrate degradation; glycolysis; pyruvate from D-glyceraldehyde 3-phosphate: step 5/5. Its activity is regulated as follows. Allosterically activated by fructose 1,6-bisphosphate. Functionally, pyruvate kinase that catalyzes the conversion of phosphoenolpyruvate to pyruvate with the synthesis of ATP, and which plays a key role in glycolysis. This chain is Pyruvate kinase PKLR (PKLR), found in Homo sapiens (Human).